We begin with the raw amino-acid sequence, 172 residues long: 3-hydroxydecanoyl-[acyl-carrier-protein] dehydratase (172 aa).

The active site involves His-71.

Belongs to the thioester dehydratase family. FabA subfamily. As to quaternary structure, homodimer.

It is found in the cytoplasm. It catalyses the reaction a (3R)-hydroxyacyl-[ACP] = a (2E)-enoyl-[ACP] + H2O. The enzyme catalyses (3R)-hydroxydecanoyl-[ACP] = (2E)-decenoyl-[ACP] + H2O. The catalysed reaction is (2E)-decenoyl-[ACP] = (3Z)-decenoyl-[ACP]. It functions in the pathway lipid metabolism; fatty acid biosynthesis. In terms of biological role, necessary for the introduction of cis unsaturation into fatty acids. Catalyzes the dehydration of (3R)-3-hydroxydecanoyl-ACP to E-(2)-decenoyl-ACP and then its isomerization to Z-(3)-decenoyl-ACP. Can catalyze the dehydratase reaction for beta-hydroxyacyl-ACPs with saturated chain lengths up to 16:0, being most active on intermediate chain length. In Pectobacterium atrosepticum (strain SCRI 1043 / ATCC BAA-672) (Erwinia carotovora subsp. atroseptica), this protein is 3-hydroxydecanoyl-[acyl-carrier-protein] dehydratase.